A 469-amino-acid chain; its full sequence is Protein DETOXIFICATION 18 (469 aa).

A run of 12 helical transmembrane segments spans residues 40–60 (LPMI…VMFA), 73–93 (LANS…SGAL), 121–141 (LVFT…FLLL), 152–172 (ALYM…QNIL), 183–203 (PLVL…YALV), 206–226 (AGLG…IAFV), 252–274 (HVVL…YWAF), 293–313 (LVAI…GLSA), 344–364 (VLAL…VGLF), 374–394 (FASL…QGVL), 406–426 (LATV…SVLC), and 438–458 (WIGL…MTIF).

This sequence belongs to the multi antimicrobial extrusion (MATE) (TC 2.A.66.1) family.

The protein resides in the membrane. The chain is Protein DETOXIFICATION 18 from Arabidopsis thaliana (Mouse-ear cress).